We begin with the raw amino-acid sequence, 769 residues long: Acetyl-coenzyme A carboxylase carboxyl transferase subunit alpha, chloroplastic (769 aa).

Residues Met-1–Thr-54 constitute a chloroplast transit peptide. One can recognise a CoA carboxyltransferase C-terminal domain in the interval Leu-132 to Glu-385. 2 coiled-coil regions span residues Glu-426–Glu-504 and Lys-631–Ser-744. The tract at residues Gly-718–Ala-769 is disordered. The segment covering Glu-721–Ala-732 has biased composition (basic and acidic residues). The span at Ala-738–Ser-756 shows a compositional bias: acidic residues. Ser-741 is modified (phosphoserine).

The protein belongs to the AccA family. In terms of assembly, acetyl-CoA carboxylase is a heterohexamer composed of biotin carboxyl carrier protein, biotin carboxylase and two subunits each of ACCase subunit alpha and ACCase plastid-coded subunit beta (accD). In terms of tissue distribution, accumulates in fatty acids synthesizing tissues such as embryos, expanding leaves, flower buds, flowers, and developing siliques.

It localises to the plastid. Its subcellular location is the chloroplast inner membrane. The catalysed reaction is N(6)-carboxybiotinyl-L-lysyl-[protein] + acetyl-CoA = N(6)-biotinyl-L-lysyl-[protein] + malonyl-CoA. Its pathway is lipid metabolism; malonyl-CoA biosynthesis; malonyl-CoA from acetyl-CoA: step 1/1. Its function is as follows. Component of the acetyl coenzyme A carboxylase (ACC) complex. First, biotin carboxylase catalyzes the carboxylation of biotin on its carrier protein (BCCP) and then the CO(2) group is transferred by the carboxyltransferase to acetyl-CoA to form malonyl-CoA. The sequence is that of Acetyl-coenzyme A carboxylase carboxyl transferase subunit alpha, chloroplastic (CAC3) from Arabidopsis thaliana (Mouse-ear cress).